The primary structure comprises 316 residues: Lipoyl synthase (316 aa).

[4Fe-4S] cluster is bound by residues Cys66, Cys71, Cys77, Cys92, Cys96, Cys99, and Ser306. Positions 78 to 295 (FNRGTATFMI…NLIAFDLGFK (218 aa)) constitute a Radical SAM core domain.

Belongs to the radical SAM superfamily. Lipoyl synthase family. The cofactor is [4Fe-4S] cluster.

It localises to the cytoplasm. It carries out the reaction [[Fe-S] cluster scaffold protein carrying a second [4Fe-4S](2+) cluster] + N(6)-octanoyl-L-lysyl-[protein] + 2 oxidized [2Fe-2S]-[ferredoxin] + 2 S-adenosyl-L-methionine + 4 H(+) = [[Fe-S] cluster scaffold protein] + N(6)-[(R)-dihydrolipoyl]-L-lysyl-[protein] + 4 Fe(3+) + 2 hydrogen sulfide + 2 5'-deoxyadenosine + 2 L-methionine + 2 reduced [2Fe-2S]-[ferredoxin]. It functions in the pathway protein modification; protein lipoylation via endogenous pathway; protein N(6)-(lipoyl)lysine from octanoyl-[acyl-carrier-protein]: step 2/2. Its function is as follows. Catalyzes the radical-mediated insertion of two sulfur atoms into the C-6 and C-8 positions of the octanoyl moiety bound to the lipoyl domains of lipoate-dependent enzymes, thereby converting the octanoylated domains into lipoylated derivatives. The protein is Lipoyl synthase of Wigglesworthia glossinidia brevipalpis.